We begin with the raw amino-acid sequence, 252 residues long: Type III pantothenate kinase (252 aa).

An ATP-binding site is contributed by 6–13; it reads DIGNTTTE. Residues Y100 and 107–110 contribute to the substrate site; that span reads GADR. The active-site Proton acceptor is the D109. D129 contacts K(+). T132 contacts ATP. T184 contributes to the substrate binding site.

It belongs to the type III pantothenate kinase family. In terms of assembly, homodimer. It depends on NH4(+) as a cofactor. The cofactor is K(+).

The protein localises to the cytoplasm. The enzyme catalyses (R)-pantothenate + ATP = (R)-4'-phosphopantothenate + ADP + H(+). It functions in the pathway cofactor biosynthesis; coenzyme A biosynthesis; CoA from (R)-pantothenate: step 1/5. Catalyzes the phosphorylation of pantothenate (Pan), the first step in CoA biosynthesis. This is Type III pantothenate kinase from Sulfurihydrogenibium sp. (strain YO3AOP1).